A 459-amino-acid polypeptide reads, in one-letter code: Argininosuccinate lyase (459 aa).

The protein belongs to the lyase 1 family. Argininosuccinate lyase subfamily.

The protein resides in the cytoplasm. The catalysed reaction is 2-(N(omega)-L-arginino)succinate = fumarate + L-arginine. Its pathway is amino-acid biosynthesis; L-arginine biosynthesis; L-arginine from L-ornithine and carbamoyl phosphate: step 3/3. The sequence is that of Argininosuccinate lyase from Prochlorococcus marinus (strain MIT 9515).